Here is a 183-residue protein sequence, read N- to C-terminus: Ribosome maturation factor RimM (183 aa).

In terms of domain architecture, PRC barrel spans 95-171 (DPDEFYDHEL…VVVIDPPEGL (77 aa)).

Belongs to the RimM family. Binds ribosomal protein uS19.

It is found in the cytoplasm. In terms of biological role, an accessory protein needed during the final step in the assembly of 30S ribosomal subunit, possibly for assembly of the head region. Essential for efficient processing of 16S rRNA. May be needed both before and after RbfA during the maturation of 16S rRNA. It has affinity for free ribosomal 30S subunits but not for 70S ribosomes. The protein is Ribosome maturation factor RimM of Rhodococcus opacus (strain B4).